The primary structure comprises 607 residues: Matrix metalloproteinase-16 (607 aa).

An N-terminal signal peptide occupies residues 1 to 31 (MILLTFSTGRRLDFVHHSGVFFLQTLLWILC). Positions 32-119 (ATVCGTEQYF…SSKFHIRRKR (88 aa)) are excised as a propeptide. N-linked (GlcNAc...) asparagine glycosylation is present at Asn83. The Cysteine switch motif lies at 99 to 106 (PRCGVPDQ). Zn(2+) is bound at residue Cys101. Residues 120–564 (YALTGQKWQH…LDNTASTVKA (445 aa)) are Extracellular-facing. Asp183 is a Ca(2+) binding site. Residues His193 and Asp195 each coordinate Zn(2+). Ca(2+) is bound by residues Asp200, Gly201, Gly203, and Phe205. His208 provides a ligand contact to Zn(2+). Gly215, Gly217, and Asp219 together coordinate Ca(2+). His221 lines the Zn(2+) pocket. Residues Asp223 and Glu226 each contribute to the Ca(2+) site. His246 serves as a coordination point for Zn(2+). Glu247 is a catalytic residue. Zn(2+)-binding residues include His250 and His256. The tract at residues 281 to 340 (DDLQGIQKIYGPPDKIPPPTRPLPTVPPHRSIPPADPRKNDRPKPPRPPTGRPSYPGAKP) is disordered. Pro residues predominate over residues 294-315 (DKIPPPTRPLPTVPPHRSIPPA). 4 Hemopexin repeats span residues 340–388 (PNIC…WRGL), 389–434 (PPSI…GSGI), 436–484 (PHGI…KGIP), and 485–532 (ESPQ…FMGC). An intrachain disulfide couples Cys343 to Cys532. Residues 565 to 585 (IAIVIPCILALCLLVLVYTVF) form a helical membrane-spanning segment. The Cytoplasmic segment spans residues 586-607 (QFKRKGTPRHILYCKRSMQEWV).

Belongs to the peptidase M10A family. As to quaternary structure, interacts with CSPG4 through CSPG4 chondroitin sulfate glycosaminoglycan. The cofactor is Zn(2+). Ca(2+) serves as cofactor. In terms of processing, the precursor is cleaved by a furin endopeptidase. Expressed in heart, brain, placenta, ovary and small intestine. Isoform Short is found in the ovary.

It localises to the cell membrane. It is found in the secreted. The protein localises to the extracellular space. The protein resides in the extracellular matrix. Its subcellular location is the cell surface. TIMP-2 shows little inhibitory activity compared to TIMP-1. TIMP-1 seems to have less binding affinity than TIMP-2 for the short isoform. In terms of biological role, endopeptidase that degrades various components of the extracellular matrix, such as collagen type III and fibronectin. Activates progelatinase A. Involved in the matrix remodeling of blood vessels. Isoform short cleaves fibronectin and also collagen type III, but at lower rate. It has no effect on type I, II, IV and V collagen. However, upon interaction with CSPG4, it may be involved in degradation and invasion of type I collagen by melanoma cells. The polypeptide is Matrix metalloproteinase-16 (Homo sapiens (Human)).